We begin with the raw amino-acid sequence, 199 residues long: Peroxiredoxin-1 (199 aa).

S2 carries the N-acetylserine modification. Positions 6-165 constitute a Thioredoxin domain; sequence AKIGHRAPQF…TLRLVQAFQF (160 aa). At K7 the chain carries N6-acetyllysine; alternate. Residue K7 forms a Glycyl lysine isopeptide (Lys-Gly) (interchain with G-Cter in SUMO2); alternate linkage. K16 and K27 each carry N6-acetyllysine. At K35 the chain carries N6-acetyllysine; alternate. N6-succinyllysine; alternate is present on K35. The active-site Cysteine sulfenic acid (-SOH) intermediate is C52. At T90 the chain carries Phosphothreonine. K120 participates in a covalent cross-link: Glycyl lysine isopeptide (Lys-Gly) (interchain with G-Cter in SUMO2). K136 is modified (N6-acetyllysine). The interval 176–199 is disordered; the sequence is GWKPGSDTIKPDVQKSKEYFSKQK. Residues 184-199 show a composition bias toward basic and acidic residues; that stretch reads IKPDVQKSKEYFSKQK. Residue K185 forms a Glycyl lysine isopeptide (Lys-Gly) (interchain with G-Cter in SUMO1) linkage. K197 is subject to N6-acetyllysine.

It belongs to the peroxiredoxin family. AhpC/Prx1 subfamily. In terms of assembly, homodimer; disulfide-linked, upon oxidation. 5 homodimers assemble to form a ring-like decamer. Interacts with GDPD5; forms a mixed-disulfide with GDPD5. Interacts with SESN1 and SESN2. Interacts with FAM107A. In terms of processing, phosphorylated on Thr-90 during the M-phase, which leads to a decrease in enzymatic activity. Acetylation increases reducing activity and resistance to superoxidation. Deacetylated by HDAC6 which decreases reducing activity.

It localises to the cytoplasm. It catalyses the reaction a hydroperoxide + [thioredoxin]-dithiol = an alcohol + [thioredoxin]-disulfide + H2O. Thiol-specific peroxidase that catalyzes the reduction of hydrogen peroxide and organic hydroperoxides to water and alcohols, respectively. Plays a role in cell protection against oxidative stress by detoxifying peroxides and as sensor of hydrogen peroxide-mediated signaling events. Might participate in the signaling cascades of growth factors and tumor necrosis factor-alpha by regulating the intracellular concentrations of H(2)O(2). Reduces an intramolecular disulfide bond in GDPD5 that gates the ability to GDPD5 to drive postmitotic motor neuron differentiation. The protein is Peroxiredoxin-1 (PRDX1) of Bos taurus (Bovine).